Here is a 122-residue protein sequence, read N- to C-terminus: Large ribosomal subunit protein bL12 (122 aa).

This sequence belongs to the bacterial ribosomal protein bL12 family. In terms of assembly, homodimer. Part of the ribosomal stalk of the 50S ribosomal subunit. Forms a multimeric L10(L12)X complex, where L10 forms an elongated spine to which 2 to 4 L12 dimers bind in a sequential fashion. Binds GTP-bound translation factors.

In terms of biological role, forms part of the ribosomal stalk which helps the ribosome interact with GTP-bound translation factors. Is thus essential for accurate translation. The chain is Large ribosomal subunit protein bL12 from Buchnera aphidicola subsp. Baizongia pistaciae (strain Bp).